The sequence spans 166 residues: NAD(P)H-quinone oxidoreductase subunit I, chloroplastic (166 aa).

4Fe-4S ferredoxin-type domains lie at 55-84 and 95-124; these read GRIHFEFDKCIACEVCVRVCPIDLPVVDWK and LNYSIDFGICIFCGNCVEYCPTNCLSMTEE. Residues cysteine 64, cysteine 67, cysteine 70, cysteine 74, cysteine 104, cysteine 107, cysteine 110, and cysteine 114 each coordinate [4Fe-4S] cluster.

This sequence belongs to the complex I 23 kDa subunit family. In terms of assembly, NDH is composed of at least 16 different subunits, 5 of which are encoded in the nucleus. [4Fe-4S] cluster serves as cofactor.

The protein resides in the plastid. It localises to the chloroplast thylakoid membrane. The catalysed reaction is a plastoquinone + NADH + (n+1) H(+)(in) = a plastoquinol + NAD(+) + n H(+)(out). It carries out the reaction a plastoquinone + NADPH + (n+1) H(+)(in) = a plastoquinol + NADP(+) + n H(+)(out). NDH shuttles electrons from NAD(P)H:plastoquinone, via FMN and iron-sulfur (Fe-S) centers, to quinones in the photosynthetic chain and possibly in a chloroplast respiratory chain. The immediate electron acceptor for the enzyme in this species is believed to be plastoquinone. Couples the redox reaction to proton translocation, and thus conserves the redox energy in a proton gradient. The chain is NAD(P)H-quinone oxidoreductase subunit I, chloroplastic from Parthenium hysterophorus (Santa Maria feverfew).